A 98-amino-acid polypeptide reads, in one-letter code: MALTKAELAEVLFDKYGVSKQDAKVLVEDFFEEIRVALERGEQVKLSGFGNFELRTKNQRPGRNPKTGEEIPISARRVVTFKPGQKFKSRVENAEPED.

This sequence belongs to the bacterial histone-like protein family. In terms of assembly, heterodimer of an alpha and a beta chain.

Functionally, this protein is one of the two subunits of integration host factor, a specific DNA-binding protein that functions in genetic recombination as well as in transcriptional and translational control. The chain is Integration host factor subunit alpha from Idiomarina loihiensis (strain ATCC BAA-735 / DSM 15497 / L2-TR).